The sequence spans 145 residues: uncharacterized protein (145 aa).

Residues 86-110 form a dksA C4-type zinc finger; it reads CERCGEEIPEPRLCAIPWTRYCAKC.

This is an uncharacterized protein from Aquifex aeolicus (strain VF5).